We begin with the raw amino-acid sequence, 187 residues long: Large ribosomal subunit protein uL22 (187 aa).

Residues 161–187 (APTDDAPAKKKLSKKKLARQKEKMMRE) are disordered. The span at 169 to 178 (KKKLSKKKLA) shows a compositional bias: basic residues.

The protein belongs to the universal ribosomal protein uL22 family.

The polypeptide is Large ribosomal subunit protein uL22 (RpL17) (Bombyx mori (Silk moth)).